Here is a 198-residue protein sequence, read N- to C-terminus: MPIGVPKVLFRNPGDPISSWVDVYNRLYRERLLFLGQGISTDLSNQLIGLMMYLSMEDENKELYLFVNSPGGWVIPGIAIYDTMQFVRPDIHTICIGLAASMGSFILAGGQLTKRIAFPHARVMIHEPYSAFYMAQVGEFVMEAVELMKLRETLTRVYAERTGKPFWVVHEDMERDIFMSATEAQAYGIVDFVAVQGK.

S101 (nucleophile) is an active-site residue. Residue H126 is part of the active site.

The protein belongs to the peptidase S14 family. In terms of assembly, component of the chloroplastic Clp protease core complex.

The protein localises to the plastid. It localises to the chloroplast stroma. It carries out the reaction Hydrolysis of proteins to small peptides in the presence of ATP and magnesium. alpha-casein is the usual test substrate. In the absence of ATP, only oligopeptides shorter than five residues are hydrolyzed (such as succinyl-Leu-Tyr-|-NHMec, and Leu-Tyr-Leu-|-Tyr-Trp, in which cleavage of the -Tyr-|-Leu- and -Tyr-|-Trp bonds also occurs).. In terms of biological role, cleaves peptides in various proteins in a process that requires ATP hydrolysis. Has a chymotrypsin-like activity. Plays a major role in the degradation of misfolded proteins. The protein is ATP-dependent Clp protease proteolytic subunit of Solanum bulbocastanum (Wild potato).